A 125-amino-acid polypeptide reads, in one-letter code: Fluoride-specific ion channel FluC (125 aa).

Transmembrane regions (helical) follow at residues 5–25 (ILAICMGASVGALARWGLALW), 37–57 (LAANLVGGYLVGVAIASFHLL), 71–91 (GFLGGLTTFSSFSAEVVTMLL), and 97–117 (VALLTAAAHLGGSLFLTWLGI). Na(+)-binding residues include G74 and T77.

The protein belongs to the fluoride channel Fluc/FEX (TC 1.A.43) family.

Its subcellular location is the cell inner membrane. It catalyses the reaction fluoride(in) = fluoride(out). Na(+) is not transported, but it plays an essential structural role and its presence is essential for fluoride channel function. Its function is as follows. Fluoride-specific ion channel. Important for reducing fluoride concentration in the cell, thus reducing its toxicity. This is Fluoride-specific ion channel FluC from Variovorax paradoxus (strain S110).